A 143-amino-acid polypeptide reads, in one-letter code: Large ribosomal subunit protein uL15 (143 aa).

2 stretches are compositionally biased toward basic residues: residues 1–13 (MIRK…KQRG) and 23–38 (KKHR…GNAG). The segment at 1–38 (MIRKSKKITKQRGSRTCGYGEAKKHRGAGHRGGRGNAG) is disordered.

Belongs to the universal ribosomal protein uL15 family. Part of the 50S ribosomal subunit.

Its function is as follows. Binds to the 23S rRNA. This Methanococcus vannielii protein is Large ribosomal subunit protein uL15.